We begin with the raw amino-acid sequence, 86 residues long: V-type proton ATPase subunit e (86 aa).

Residues 1–21 form a helical membrane-spanning segment; it reads MGILIPLVSVSAFWAIIGFGG. The Cytoplasmic portion of the chain corresponds to 22 to 32; that stretch reads PWIVPKGPNRG. A helical membrane pass occupies residues 33–53; the sequence is IIQLMIIMTAVCCWMFWIMVF. Residues 54–86 are Lumenal-facing; that stretch reads LHQLNPLIGPQINVKTIRWISEKWGDAPNVINN.

The protein belongs to the V-ATPase e1/e2 subunit family. In terms of assembly, V-ATPase is a heteromultimeric enzyme made up of two complexes: the ATP-hydrolytic V1 complex and the proton translocation V0 complex. The V1 complex consists of three catalytic AB heterodimers that form a heterohexamer, three peripheral stalks each consisting of EG heterodimers, one central rotor including subunits D and F, and the regulatory subunits C and H. The proton translocation complex V0 consists of the proton transport subunit a, a ring of proteolipid subunits c9c'', rotary subunit d, subunits e and f, and the accessory subunits vah-19/Ac45 and vah-20/PRR.

It is found in the apical cell membrane. In terms of biological role, subunit of the V0 complex of vacuolar(H+)-ATPase (V-ATPase), a multisubunit enzyme composed of a peripheral complex (V1) that hydrolyzes ATP and a membrane integral complex (V0) that translocates protons. V-ATPase is responsible for acidifying and maintaining the pH of intracellular compartments and in some cell types, is targeted to the plasma membrane, where it is responsible for acidifying the extracellular environment. During embryonic development, the V-ATPase is required to repress fusion of epidermal cells probably by negatively regulating eff-1-mediated cell fusion. This Caenorhabditis elegans protein is V-type proton ATPase subunit e.